The following is a 188-amino-acid chain: UPF0301 protein XC_1365 (188 aa).

This sequence belongs to the UPF0301 (AlgH) family.

This is UPF0301 protein XC_1365 from Xanthomonas campestris pv. campestris (strain 8004).